Reading from the N-terminus, the 1176-residue chain is Histidine kinase 2 (1176 aa).

The Cytoplasmic portion of the chain corresponds to 1-29 (MSITCELLNLTSKKAKKSSSSDKKWLKKP). The chain crosses the membrane as a helical span at residues 30–50 (LFFLILCGSLVIVLVMFLRLG). Topologically, residues 51 to 174 (RSQKEETDSC…LEQGLSSYLR (124 aa)) are extracellular. A helical transmembrane segment spans residues 175 to 195 (NAWWCLILGVLVCHKIYVSHS). Over 196 to 232 (KARGERKEKVHLQEALAPKKQQQRAQTSSRGAGRWRK) the chain is Cytoplasmic. The chain crosses the membrane as a helical span at residues 233–253 (NILLLGILGGVSFSVWWFWDT). Residues 254–536 (NEEIIMKRRE…CRFKHKLPIP (283 aa)) are Extracellular-facing. One can recognise a CHASE domain in the interval 302 to 526 (IPSAIDQRTF…GDPSRNHEMH (225 aa)). A helical membrane pass occupies residues 537–557 (WTAITPSILVLVITFLVGYIL). The Cytoplasmic segment spans residues 558–1176 (YEAINRIATV…TAVARFFEPC (619 aa)). Positions 594–867 (TVSHEIRTPM…TFSFTGVFGK (274 aa)) constitute a Histidine kinase domain. Residue His-597 is modified to Phosphohistidine; by autocatalysis. 2 Response regulatory domains span residues 891–1013 (RALV…QETL) and 1036–1173 (QILV…ARFF). Asp-942 and Asp-1086 each carry 4-aspartylphosphate.

In terms of assembly, self-interacts. Interacts with AHK3, AHP1, AHP2, AHP3, AHP5, ATAF2, AT2S3, BETAA-AD, CYP20-2, DRP1A, HIR1, HIR2, PI4KB1, PI4KG5 and At4g12060. Post-translationally, autophosphorylated predominantly on His residues. Activation probably requires a transfer of a phosphate group between a His in the transmitter domain and an Asp of the receiver domain. In terms of tissue distribution, expressed in roots, leaves and flowers, mostly in the vascular tissues. Present in seedlings.

It localises to the endoplasmic reticulum membrane. It catalyses the reaction ATP + protein L-histidine = ADP + protein N-phospho-L-histidine.. With respect to regulation, activated by cytokinins to initiate phosphorelay signaling. In terms of biological role, cytokinins (CK) receptor related to bacterial two-component regulators. Functions as a histidine kinase and transmits the stress signal to a downstream MAPK cascade. This protein undergoes an ATP-dependent autophosphorylation at a conserved histidine residue in the kinase core, and a phosphoryl group is then transferred to a conserved aspartate residue in the receiver domain. In the presence of cytokinin, feeds phosphate to phosphorelay-integrating histidine phosphotransfer protein (HPt) and activates subsequent cascade. Involved in meristems establishment in seedlings. Redundant negative regulator of drought and salt stress responses and abscisic acid (ABA) signaling. Together with AHK3, plays a negative regulatory role in cold stress signaling via inhibition of ABA response, occurring independently of the cold acclimation pathway. Redundant positive regulator of cytokinin signaling that regulates many developmental processes including seed germination, cell division, seed size, chlorophyll retention during leaf senescence, root repression and shoot promotion. Involved in alkamides (e.g. N-isobutyl decanamide) and N-acylethanolamides (NAE) signaling that control meristematic activity and differentiation processes during plant development. Contributes to vascular bundle formation and secondary growth in a cytokinin-dependent manner, probably by promoting the maintenance of mitotic activity and/or identity of procambial cells. Together with AHK4, required for growth and reproduction promotion stimulated by the endophytic fungus Piriformospora indica in a trans-zeatin-dependent manner. Required by the cytokinin-dependent flower development regulation pathway. This is Histidine kinase 2 (AHK2) from Arabidopsis thaliana (Mouse-ear cress).